A 1043-amino-acid chain; its full sequence is Non-canonical nonribosomal peptide synthetase cpsA (1043 aa).

An adenylation (A) domain region spans residues arginine 41–tyrosine 386. A Carrier domain is found at glutamine 549 to glycine 626. At serine 586 the chain carries O-(pantetheine 4'-phosphoryl)serine. Residues methionine 671 to alanine 914 form a short-chain dehydrogenase/reductase (R) domain region. Residues threonine 672–isoleucine 915 enclose the Thioester reductase (TE) domain.

Belongs to the NRP synthetase family. Pantetheine 4'-phosphate serves as cofactor.

It carries out the reaction L-valine + ATP + NADPH + H(+) = L-valinal + AMP + diphosphate + NADP(+). It catalyses the reaction L-tryptophan + ATP + NADPH + H(+) = L-tryptophanal + AMP + diphosphate + NADP(+). It participates in alkaloid biosynthesis. Non-canonical nonribosomal peptide synthetase; part of the gene cluster that mediates the biosynthesis of campesine G, a dimeric indole piperazine alkaloid that shows good insecticidal activity Galleria mellonella. CpsA catalyzes the first steps of the pathway by producing L-tryptophanal and L-valinal from their respective amino-acids. These products condensate spontaneously to form trypyl-valyl pyrazine also known as didehydrocampesine A. The NmrA-like family domain-containing oxidoreductase cpsB is the next enzyme in cps pathway and reduces the unstable didehydrocampesine A to campesine A. The methyltransferase cpsF and the acetyltransferase cpsE both recognize N13 of piperazine ring to carry out methylation and acetylation of campesine A to produce campesine C and B, respectively. The cytochrome P450 monooxygenase cpsD then acts as a dimerase that catalyzes oxidative heterocoupling between campesine B and C to produce heterodimers with unexpected 6/5/6/6/6/6/5/6 eight-ring scaffold called campesine D. Finally,the cytochrome P450 monooxygenase cpsC is a regioselective dehydrogenase that catalyzes dehydrogenation reaction towards C2-N1 to produce campesine G. The sequence is that of Non-canonical nonribosomal peptide synthetase cpsA from Aspergillus campestris (strain IBT 28561).